The chain runs to 253 residues: 3-dehydroquinate dehydratase (253 aa).

3-dehydroquinate is bound by residues Glu-46–Arg-48 and Arg-82. The active-site Proton donor/acceptor is His-143. Lys-170 (schiff-base intermediate with substrate) is an active-site residue. The 3-dehydroquinate site is built by Arg-213, Ser-232, and Gln-236.

This sequence belongs to the type-I 3-dehydroquinase family. In terms of assembly, homodimer.

The enzyme catalyses 3-dehydroquinate = 3-dehydroshikimate + H2O. The protein operates within metabolic intermediate biosynthesis; chorismate biosynthesis; chorismate from D-erythrose 4-phosphate and phosphoenolpyruvate: step 3/7. Its function is as follows. Involved in the third step of the chorismate pathway, which leads to the biosynthesis of aromatic amino acids. Catalyzes the cis-dehydration of 3-dehydroquinate (DHQ) and introduces the first double bond of the aromatic ring to yield 3-dehydroshikimate. The protein is 3-dehydroquinate dehydratase of Clostridium novyi (strain NT).